A 64-amino-acid polypeptide reads, in one-letter code: Large ribosomal subunit protein bL35 (64 aa).

This sequence belongs to the bacterial ribosomal protein bL35 family.

The sequence is that of Large ribosomal subunit protein bL35 from Shewanella sediminis (strain HAW-EB3).